A 251-amino-acid polypeptide reads, in one-letter code: Uridylate kinase (251 aa).

Residue 26 to 29 (KLGG) participates in ATP binding. Gly67 is a UMP binding site. Residues Gly68 and Arg72 each contribute to the ATP site. Residues Asp87 and 148–155 (MGLPYFST) each bind UMP. The ATP site is built by Phe181 and Asp184.

Belongs to the UMP kinase family. In terms of assembly, homohexamer.

The protein localises to the cytoplasm. The enzyme catalyses UMP + ATP = UDP + ADP. The protein operates within pyrimidine metabolism; CTP biosynthesis via de novo pathway; UDP from UMP (UMPK route): step 1/1. Inhibited by UTP. Its function is as follows. Catalyzes the reversible phosphorylation of UMP to UDP. This is Uridylate kinase from Mycolicibacterium vanbaalenii (strain DSM 7251 / JCM 13017 / BCRC 16820 / KCTC 9966 / NRRL B-24157 / PYR-1) (Mycobacterium vanbaalenii).